The primary structure comprises 113 residues: Defense protein 2 (113 aa).

Belongs to the attacin/sarcotoxin-2 family.

It is found in the secreted. In terms of biological role, has antibacterial activity against both Gram-positive and Gram-negative bacteria. This chain is Defense protein 2, found in Lonomia obliqua (Moth).